The chain runs to 676 residues: Forkhead box protein biniou (676 aa).

Disordered stretches follow at residues 22 to 50 (YHDP…GHPY), 131 to 160 (AHSA…SSST), 203 to 232 (QEQA…SRIS), 249 to 312 (NYSS…PEKP), and 583 to 651 (IQHA…AYLP). A compositionally biased stretch (basic residues) spans 34 to 48 (PHAHSHPHQHTHTGH). A compositionally biased stretch (polar residues) spans 133–160 (SAGSASPQSNSKTPTDLPQDLQYASSST). Positions 203-220 (QEQAGQQQPQQLPAQQLQ) are enriched in low complexity. Over residues 257–273 (PAKSLNGSESSPPSQNH) the composition is skewed to polar residues. Positions 311 to 408 (KPALSYINMI…DEGSLRRRPR (98 aa)) form a DNA-binding region, fork-head. Low complexity predominate over residues 583–593 (IQHAQAQAQAQ). A compositionally biased stretch (basic residues) spans 594–611 (AHHHHHQHHASHPSHSHQ). Positions 612–625 (GHGSMHQNHGTSST) are enriched in low complexity. Over residues 637-647 (GIDHSPIDRKP) the composition is skewed to basic and acidic residues.

Binds to DNA. As to expression, in embryo, expressed in all types of visceral muscles and their progenitors (at protein level). In late stage 10 embryo, expressed in the caudal visceral mesoderm and trunk and hindgut visceral mesoderm progenitors.

The protein localises to the nucleus. In terms of biological role, component of a regulatory network controlling visceral mesoderm development and midgut morphogenesis. Transcriptional regulator involved in the activation of a large number of genes in the visceral mesoderm including betaTub60D, dpp and Hand. Binds to and regulates a number of enhancers driving expression in the visceral mesoderm in a temporally and spatially restricted manner. Also to binds to enhancers cooperatively with activators, such as bap or HLH54F, to coregulate expression of shared target genes in the visceral mesoderm. Binds to the Ndg enhancer and drives expression of Ndg in the late visceral musculature. May be involved in the transcriptional regulation of wupA in the visceral mesoderm. Plays an indirect role in the later stages of salivary gland positioning. The polypeptide is Forkhead box protein biniou (bin) (Drosophila melanogaster (Fruit fly)).